A 368-amino-acid chain; its full sequence is Chorismate synthase (368 aa).

Arginine 46 is a binding site for NADP(+). Residues 124 to 126, glycine 284, 299 to 303, and arginine 326 contribute to the FMN site; these read RAS and KPTPS.

This sequence belongs to the chorismate synthase family. The cofactor is FMNH2.

It carries out the reaction 5-O-(1-carboxyvinyl)-3-phosphoshikimate = chorismate + phosphate. Its pathway is metabolic intermediate biosynthesis; chorismate biosynthesis; chorismate from D-erythrose 4-phosphate and phosphoenolpyruvate: step 7/7. Functionally, catalyzes the anti-1,4-elimination of the C-3 phosphate and the C-6 proR hydrogen from 5-enolpyruvylshikimate-3-phosphate (EPSP) to yield chorismate, which is the branch point compound that serves as the starting substrate for the three terminal pathways of aromatic amino acid biosynthesis. This reaction introduces a second double bond into the aromatic ring system. This chain is Chorismate synthase, found in Pyrobaculum aerophilum (strain ATCC 51768 / DSM 7523 / JCM 9630 / CIP 104966 / NBRC 100827 / IM2).